A 289-amino-acid chain; its full sequence is Delta-sarcoglycan (289 aa).

The Cytoplasmic portion of the chain corresponds to methionine 1–phenylalanine 37. A helical; Signal-anchor for type II membrane protein transmembrane segment spans residues valine 38–leucine 56. Residues lysine 57–leucine 289 are Extracellular-facing. Asparagine 60 and asparagine 108 each carry an N-linked (GlcNAc...) asparagine glycan. 2 cysteine pairs are disulfide-bonded: cysteine 263/cysteine 288 and cysteine 265/cysteine 281. The N-linked (GlcNAc...) asparagine glycan is linked to asparagine 284.

It belongs to the sarcoglycan beta/delta/gamma/zeta family. As to quaternary structure, interacts with FLNC. Cross-link to form 2 major subcomplexes: one consisting of SGCB, SGCD and SGCG and the other consisting of SGCB and SGCD. The association between SGCB and SGCG is particularly strong while SGCA is loosely associated with the other sarcoglycans. Interacts with DAG1. Post-translationally, disulfide bonds are present. As to expression, most strongly expressed in skeletal and heart muscle. Also detected in proliferating myoblasts.

Its subcellular location is the cell membrane. The protein localises to the sarcolemma. It is found in the cytoplasm. It localises to the cytoskeleton. In terms of biological role, component of the sarcoglycan complex, a subcomplex of the dystrophin-glycoprotein complex which forms a link between the F-actin cytoskeleton and the extracellular matrix. This Mus musculus (Mouse) protein is Delta-sarcoglycan (Sgcd).